The chain runs to 78 residues: Large ribosomal subunit protein bL28 (78 aa).

Belongs to the bacterial ribosomal protein bL28 family.

This Leifsonia xyli subsp. xyli (strain CTCB07) protein is Large ribosomal subunit protein bL28.